Consider the following 135-residue polypeptide: Small ribosomal subunit protein uS17 (135 aa).

The interval 1-59 (MAEAKTGAKAAPRVAKAAKAAPKKAAPNDAEAIGAANAANVKGPKHTPRTPKPRGRRKT) is disordered. Residues 8–42 (AKAAPRVAKAAKAAPKKAAPNDAEAIGAANAANVK) are compositionally biased toward low complexity. A compositionally biased stretch (basic residues) spans 43 to 59 (GPKHTPRTPKPRGRRKT).

The protein belongs to the universal ribosomal protein uS17 family. As to quaternary structure, part of the 30S ribosomal subunit.

Functionally, one of the primary rRNA binding proteins, it binds specifically to the 5'-end of 16S ribosomal RNA. This Mycobacterium bovis (strain ATCC BAA-935 / AF2122/97) protein is Small ribosomal subunit protein uS17.